The sequence spans 380 residues: Cytochrome b (380 aa).

The next 4 helical transmembrane spans lie at 34 to 54 (FGSLLGICLATQILTGLLLAM), 78 to 99 (WLIRNLHANGASFFFICVYLHI), 114 to 134 (WNTGILLLLTLMATAFVGYVL), and 179 to 199 (FFALHFLLPFAIAGLTLIHLT). His-84 and His-98 together coordinate heme b. Residues His-183 and His-197 each coordinate heme b. His-202 provides a ligand contact to a ubiquinone. Helical transmembrane passes span 227 to 247 (LKDALGFMLMFLPLTTLALFS), 289 to 309 (LGGVLALAASVLILFLSPLLH), 321 to 341 (LSQLLFWTLVANLFILTWVGS), and 348 to 368 (FIIIGQLASLTYFTILLILFP).

The protein belongs to the cytochrome b family. As to quaternary structure, the cytochrome bc1 complex contains 11 subunits: 3 respiratory subunits (MT-CYB, CYC1 and UQCRFS1), 2 core proteins (UQCRC1 and UQCRC2) and 6 low-molecular weight proteins (UQCRH/QCR6, UQCRB/QCR7, UQCRQ/QCR8, UQCR10/QCR9, UQCR11/QCR10 and a cleavage product of UQCRFS1). This cytochrome bc1 complex then forms a dimer. Heme b serves as cofactor.

The protein localises to the mitochondrion inner membrane. Its function is as follows. Component of the ubiquinol-cytochrome c reductase complex (complex III or cytochrome b-c1 complex) that is part of the mitochondrial respiratory chain. The b-c1 complex mediates electron transfer from ubiquinol to cytochrome c. Contributes to the generation of a proton gradient across the mitochondrial membrane that is then used for ATP synthesis. The chain is Cytochrome b (MT-CYB) from Oceanites oceanicus (Wilson's storm petrel).